The sequence spans 130 residues: MAKMSTDDLLDAFKEMTLLELSDFVKKFEETFEVTAAAPVAVAAAGPAAGGAPAEAAEEQSEFDVILESAGDKKIGVIKVVREIVSGLGLKEAKDLVDGAPKPLLEKVAKEAADDAKAKLEAAGATVTVK.

It belongs to the bacterial ribosomal protein bL12 family. In terms of assembly, homodimer. Part of the ribosomal stalk of the 50S ribosomal subunit. Forms a multimeric L10(L12)X complex, where L10 forms an elongated spine to which 2 to 4 L12 dimers bind in a sequential fashion. Binds GTP-bound translation factors.

Forms part of the ribosomal stalk which helps the ribosome interact with GTP-bound translation factors. Is thus essential for accurate translation. This is Large ribosomal subunit protein bL12 from Mycolicibacterium paratuberculosis (strain ATCC BAA-968 / K-10) (Mycobacterium paratuberculosis).